Reading from the N-terminus, the 813-residue chain is Histone acetyltransferase KAT2B (813 aa).

2 disordered regions span residues 1–55 (MAEA…GGSA) and 380–423 (NSTS…EAKR). Over residues 32–46 (ASCGPATAVAAAGTA) the composition is skewed to low complexity. Positions 380–391 (NSTSHEQINGGR) are enriched in polar residues. The segment covering 406 to 423 (PGEKRKMNNSHAPEEAKR) has biased composition (basic and acidic residues). An N-acetyltransferase domain is found at 484–632 (LNQKPNKKIL…GATLMGCELN (149 aa)). Catalysis depends on Glu-551, which acts as the Proton donor/acceptor. Acetyl-CoA is bound by residues 555 to 557 (CAV), 562 to 568 (QVKGYGT), and 593 to 596 (YAIG). The region spanning 704 to 808 (KDPEQLYSTL…KFFFSKIKEA (105 aa)) is the Bromo domain.

Belongs to the acetyltransferase family. GCN5 subfamily. In terms of assembly, interacts with BCAS3. Interacts with SIRT1. Interacts with EP300, CREBBP and DDX17. Component of a large chromatin remodeling complex, at least composed of MYSM1, KAT2B/PCAF, RBM10 and KIF11/TRIP5. Interacts with KLF1; the interaction does not acetylate KLF1 and there is no enhancement of its transactivational activity. Interacts with NFE4. Interacts with MECOM. Interacts with NR2C2 (hypophosphorylated and unsumoylated form); the interaction promotes the transactivation activity of NR2C2. Interacts with NFE4. Interacts with MECOM. Interacts with E2F1; the interaction acetylates E2F1 augmenting its DNA-binding and transcriptional activity. Interacts with NPAS2, BMAL1 and CLOCK. Interacts (unsumoylated form) with NR2C1; the interaction promotes transactivation activity. Interacts with CEBPB. Interacts with NR4A3. Interacts with TBX5. Interacts with PLK4. Interacts with RB1; this interaction leads to RB1 acetylation. Interacts with VRK1.

The protein resides in the nucleus. Its subcellular location is the cytoplasm. It localises to the cytoskeleton. The protein localises to the microtubule organizing center. It is found in the centrosome. It carries out the reaction L-lysyl-[histone] + acetyl-CoA = N(6)-acetyl-L-lysyl-[histone] + CoA + H(+). It catalyses the reaction L-lysyl-[protein] + acetyl-CoA = N(6)-acetyl-L-lysyl-[protein] + CoA + H(+). The enzyme catalyses spermidine + acetyl-CoA = N(8)-acetylspermidine + CoA + H(+). Functionally, functions as a histone acetyltransferase (HAT) to promote transcriptional activation. Has significant histone acetyltransferase activity with core histones (H3 and H4), and also with nucleosome core particles. Has a a strong preference for acetylation of H3 at 'Lys-9' (H3K9ac). Also acetylates non-histone proteins, such as ACLY, MAPRE1/EB1, PLK4, RRP9/U3-55K and TBX5. Acts as a circadian transcriptional coactivator which enhances the activity of the circadian transcriptional activators: NPAS2-BMAL1 and CLOCK-BMAL1 heterodimers. Involved in heart and limb development by mediating acetylation of TBX5, acetylation regulating nucleocytoplasmic shuttling of TBX5. Acts as a negative regulator of centrosome amplification by mediating acetylation of PLK4. Acetylates RRP9/U3-55K, a core subunit of the U3 snoRNP complex, impairing pre-rRNA processing. Acetylates MAPRE1/EB1, promoting dynamic kinetochore-microtubule interactions in early mitosis. Also acetylates spermidine. The sequence is that of Histone acetyltransferase KAT2B from Mus musculus (Mouse).